Reading from the N-terminus, the 138-residue chain is Endonuclease V (138 aa).

T2 serves as the catalytic Nucleophile; via amide nitrogen. E23 acts as the Proton acceptor in catalysis.

Monomer.

The catalysed reaction is Cleaves the N-glycosidic bond between the 5'-pyrimidine residue in cyclobutadipyrimidine (in DNA) and the corresponding deoxy-D-ribose residue.. It catalyses the reaction 2'-deoxyribonucleotide-(2'-deoxyribose 5'-phosphate)-2'-deoxyribonucleotide-DNA = a 3'-end 2'-deoxyribonucleotide-(2,3-dehydro-2,3-deoxyribose 5'-phosphate)-DNA + a 5'-end 5'-phospho-2'-deoxyribonucleoside-DNA + H(+). Its function is as follows. Participates in the repair of UV-damaged DNA by excising pyrimidine dimers that are the major UV-lesions. DNA glycosylase activity hydrolyzes the glycosylic bond of the 5' pyrimidine of the dimer. This leaves apurinic/apyrimidic (AP) sites in the DNA. These AP sites are removed by the AP lyase activity which cleaves the intrapyrimidine phosphodiester bond. Catalysis proceeds via a protonated imine covalent intermediate between the alpha-amino group of the N-terminal threonine residue and the C1' of the deoxyribose sugar of the 5' pyrimidine at the dimer site. This chain is Endonuclease V, found in Enterobacteria phage T4 (Bacteriophage T4).